The chain runs to 291 residues: Putative ribosomal protein uL16-like, mitochondrial (291 aa).

The transit peptide at 1 to 27 directs the protein to the mitochondrion; it reads MQRFMFSRVVEHQRQISRGFLSLVPSL. Basic and acidic residues predominate over residues 127 to 137; the sequence is VHETSNNEKKQ. The segment at 127-173 is disordered; that stretch reads VHETSNNEKKQQKQKSSVNEKKPKKKKKSSISDIPRRTKFQKHHRGR. Residues 163–173 are compositionally biased toward basic residues; sequence RTKFQKHHRGR.

The protein belongs to the universal ribosomal protein uL16 family.

It is found in the mitochondrion. In terms of biological role, could be a component of the large subunit of mitochondrial ribosome. The sequence is that of Putative ribosomal protein uL16-like, mitochondrial from Arabidopsis thaliana (Mouse-ear cress).